A 117-amino-acid chain; its full sequence is Putative pterin-4-alpha-carbinolamine dehydratase (117 aa).

This sequence belongs to the pterin-4-alpha-carbinolamine dehydratase family.

It carries out the reaction (4aS,6R)-4a-hydroxy-L-erythro-5,6,7,8-tetrahydrobiopterin = (6R)-L-erythro-6,7-dihydrobiopterin + H2O. The chain is Putative pterin-4-alpha-carbinolamine dehydratase from Colwellia psychrerythraea (strain 34H / ATCC BAA-681) (Vibrio psychroerythus).